A 277-amino-acid chain; its full sequence is Large ribosomal subunit protein uL2 (277 aa).

2 disordered regions span residues 24–55 (ITTSTPEKSLLRPLKKKAGRNNQGKLTVRHHG) and 221–277 (RGSV…RKKK).

The protein belongs to the universal ribosomal protein uL2 family. As to quaternary structure, part of the 50S ribosomal subunit. Forms a bridge to the 30S subunit in the 70S ribosome.

One of the primary rRNA binding proteins. Required for association of the 30S and 50S subunits to form the 70S ribosome, for tRNA binding and peptide bond formation. It has been suggested to have peptidyltransferase activity; this is somewhat controversial. Makes several contacts with the 16S rRNA in the 70S ribosome. This Listeria welshimeri serovar 6b (strain ATCC 35897 / DSM 20650 / CCUG 15529 / CIP 8149 / NCTC 11857 / SLCC 5334 / V8) protein is Large ribosomal subunit protein uL2.